The primary structure comprises 148 residues: Large-conductance mechanosensitive channel (148 aa).

2 consecutive transmembrane segments (helical) span residues 14–34 and 85–105; these read VVDM…INTL and GIFV…FLSV.

Belongs to the MscL family. In terms of assembly, homopentamer.

The protein resides in the cell inner membrane. In terms of biological role, channel that opens in response to stretch forces in the membrane lipid bilayer. May participate in the regulation of osmotic pressure changes within the cell. This chain is Large-conductance mechanosensitive channel, found in Chlorobium phaeobacteroides (strain DSM 266 / SMG 266 / 2430).